The following is a 267-amino-acid chain: Cilia- and flagella-associated protein 300 (267 aa).

This sequence belongs to the CFAP300 family.

The protein localises to the cytoplasm. The protein resides in the cytoskeleton. It localises to the cilium axoneme. Its function is as follows. Cilium- and flagellum-specific protein that plays a role in axonemal structure organization and motility. May play a role in outer and inner dynein arm assembly. The polypeptide is Cilia- and flagella-associated protein 300 (Xenopus tropicalis (Western clawed frog)).